Here is a 246-residue protein sequence, read N- to C-terminus: 3'(2'),5'-bisphosphate nucleotidase CysQ (246 aa).

Positions 64, 83, 85, 86, and 205 each coordinate Mg(2+). E64 lines the substrate pocket. Residues 85-88 (LDGT) and D205 each bind substrate.

The protein belongs to the inositol monophosphatase superfamily. CysQ family. Mg(2+) serves as cofactor.

The protein localises to the cell inner membrane. The enzyme catalyses adenosine 3',5'-bisphosphate + H2O = AMP + phosphate. Its function is as follows. Converts adenosine-3',5'-bisphosphate (PAP) to AMP. This is 3'(2'),5'-bisphosphate nucleotidase CysQ from Shigella flexneri.